The sequence spans 402 residues: Deoxyguanosinetriphosphate triphosphohydrolase-like protein (402 aa).

The tract at residues 20 to 39 is disordered; sequence PAFSRGRLVPEPESPTRTPF. The region spanning 73–217 is the HD domain; it reads RLTHTIEVAQ…AAIADDIAYN (145 aa).

Belongs to the dGTPase family. Type 2 subfamily.

In Brucella ovis (strain ATCC 25840 / 63/290 / NCTC 10512), this protein is Deoxyguanosinetriphosphate triphosphohydrolase-like protein.